A 355-amino-acid polypeptide reads, in one-letter code: Probable nitronate monooxygenase (355 aa).

Residues asparagine 71, glutamine 175, glycine 180, glycine 218, and 237–240 (QMGT) contribute to the FMN site.

It belongs to the nitronate monooxygenase family. NMO class I subfamily. The cofactor is FMN.

The catalysed reaction is 3 propionate 3-nitronate + 3 O2 + H2O = 3 3-oxopropanoate + 2 nitrate + nitrite + H2O2 + 3 H(+). Nitronate monooxygenase that uses molecular oxygen to catalyze the oxidative denitrification of alkyl nitronates. Acts on propionate 3-nitronate (P3N), the presumed physiological substrate. Probably functions in the detoxification of P3N, a metabolic poison produced by plants and fungi as a defense mechanism. In Staphylococcus aureus (strain USA300), this protein is Probable nitronate monooxygenase.